A 532-amino-acid chain; its full sequence is Cilia- and flagella-associated protein 97 (532 aa).

Phosphoserine is present on Ser19. Disordered stretches follow at residues 28-83 (ETNS…PVEN), 116-263 (IPNR…TPDI), 306-333 (KAAKKGKEKHEPDVSSKSSSVLDSSLDH), 398-421 (LSRQAEKPGSKSTIPRSADHPPKL), and 485-532 (GQYS…TAWL). Basic and acidic residues predominate over residues 35–49 (KQNDDPKERIDKDTK). Positions 50 to 63 (NVNSNTGMQTTENY) are enriched in polar residues. Over residues 67–82 (KGNERNVKFPPEHPVE) the composition is skewed to basic and acidic residues. Residues 127-139 (GEDDYYTDGEESS) show a composition bias toward acidic residues. A Phosphothreonine modification is found at Thr133. A phosphoserine mark is found at Ser138 and Ser139. Low complexity-rich tracts occupy residues 170–185 (SSSSSSSLSSSSSGSG) and 194–205 (DSHLSDSSPSSK). Residue Ser218 is modified to Phosphoserine. Positions 227–239 (IKSTETQPSSTTP) are enriched in polar residues. Ser248 carries the post-translational modification Phosphoserine. Residues 253–263 (TDVSPLSTPDI) show a composition bias toward polar residues. Residues 320–329 (SSKSSSVLDS) are compositionally biased toward low complexity. At Ser330 the chain carries Phosphoserine. Residues 374 to 450 (GKNYSFTREE…ALLKRLEAVK (77 aa)) are a coiled coil. Polar residues predominate over residues 493-503 (SRTSSATSGLS).

It belongs to the CFAP97 family.

The polypeptide is Cilia- and flagella-associated protein 97 (Homo sapiens (Human)).